The chain runs to 268 residues: Small ribosomal subunit protein eS1 (268 aa).

The tract at residues 1-21 (MAVGKNKGLSKGGKKGGKKKV) is disordered.

This sequence belongs to the eukaryotic ribosomal protein eS1 family. As to quaternary structure, component of the small ribosomal subunit. Mature ribosomes consist of a small (40S) and a large (60S) subunit. The 40S subunit contains about 33 different proteins and 1 molecule of RNA (18S). The 60S subunit contains about 49 different proteins and 3 molecules of RNA (28S, 5.8S and 5S).

It is found in the cytoplasm. Essential for oogenesis; required for late follicle cell development. The protein is Small ribosomal subunit protein eS1 of Drosophila erecta (Fruit fly).